The sequence spans 581 residues: Multidrug and toxin extrusion protein 2 (581 aa).

Topologically, residues 1–33 are cytoplasmic; it reads MDSLQDTVPLDHGGCCPALSRLVPRGFGTEMWT. Residues 34 to 54 traverse the membrane as a helical segment; it reads LFALSGPLFLFQVLTFMIYIV. The Extracellular portion of the chain corresponds to 55-66; it reads STVFCGHLGKVE. Residues 67–87 traverse the membrane as a helical segment; it reads LASVTLAVAFVNVCGVSVGVG. At 88-119 the chain is on the cytoplasmic side; it reads LSSACDTLMSQSFGSPNKKHVGVILQRGALVL. Residues 120-140 form a helical membrane-spanning segment; sequence LLCCLPCWALFLNTQHILLLF. Residues 141 to 153 are Extracellular-facing; the sequence is RQDPEVSRLTQDY. A helical membrane pass occupies residues 154–174; it reads VMIFIPGLPVIFLYNLLAKYL. Topologically, residues 175 to 183 are cytoplasmic; sequence QNQKITWPQ. The chain crosses the membrane as a helical span at residues 184-204; it reads VLSGVVGNCVNGVANYALVSV. The Extracellular segment spans residues 205–212; the sequence is LNLGVRGS. A helical transmembrane segment spans residues 213 to 233; sequence AYANIISQFAQTVFLLLYIVL. At 234 to 253 the chain is on the cytoplasmic side; sequence KKLHLETWAGWSSQCLQDWG. Residues 254-273 form a helical membrane-spanning segment; it reads PFFSLAVPSMLMICVEWWAY. Residues 274 to 317 lie on the Extracellular side of the membrane; it reads EIGSFLMGLLSVVDLSAQAVIYEVATVTYMRHSHHLAYTAHVAR. Residues 318–338 traverse the membrane as a helical segment; that stretch reads IPLGLSIGVCVRVGMALGAAD. Residues 339 to 346 lie on the Cytoplasmic side of the membrane; sequence TVQAKRSA. A helical membrane pass occupies residues 347–367; that stretch reads VSGVLSIVGISLVLGTLISIL. The Extracellular segment spans residues 368–380; the sequence is KNQLGHIFTNDED. A helical transmembrane segment spans residues 381–401; it reads VIALVSQVLPVYSVFHVFEAI. Topologically, residues 402–420 are cytoplasmic; sequence CCVYGGVLRGTGKQAFGAA. A helical membrane pass occupies residues 421 to 441; sequence VNAITYYIIGLPLGILLTFVV. Residues 442–444 lie on the Extracellular side of the membrane; the sequence is RMR. A helical transmembrane segment spans residues 445–465; the sequence is IMGLWLGMLACVFLATAAFVA. Residues 466–557 are Cytoplasmic-facing; that stretch reads YTARLDWKLA…LSVKQLVIRR (92 aa). A disordered region spans residues 481–513; it reads KHSGQQQQQQRAESTATRSGPEKAVLSSVATGS. Residues 558-578 form a helical membrane-spanning segment; the sequence is GAALGAASATLMVGLTVRILA. The Extracellular portion of the chain corresponds to 579 to 581; it reads TRH.

The protein belongs to the multi antimicrobial extrusion (MATE) (TC 2.A.66.1) family.

Its subcellular location is the cell membrane. It is found in the apical cell membrane. The catalysed reaction is thiamine(out) + H(+)(in) = thiamine(in) + H(+)(out). It carries out the reaction estrone 3-sulfate(in) + H(+)(out) = estrone 3-sulfate(out) + H(+)(in). It catalyses the reaction creatinine(in) + H(+)(out) = creatinine(out) + H(+)(in). Functionally, multidrug efflux pump that functions as a H(+)/organic cation antiporter. Mediates the efflux of cationic compounds, such as the model cations, tetraethylammonium (TEA) and 1-methyl-4-phenylpyridinium (MPP+), the platinum-based drug oxaliplatin or weak bases that are positively charged at physiological pH, cimetidine or the antidiabetic drug metformin. Mediates the efflux of the endogenous compounds creatinine, thiamine and estrone-3-sulfate. Plays a physiological role in the excretion of drugs, toxins and endogenous metabolites through the kidney. The chain is Multidrug and toxin extrusion protein 2 (SLC47A2) from Pongo abelii (Sumatran orangutan).